Reading from the N-terminus, the 198-residue chain is Patulin synthesis protein F (198 aa).

A signal peptide spans 1–18 (MRLSTVLLGSLLGALTQA). N-linked (GlcNAc...) asparagine glycans are attached at residues Asn128 and Asn184.

The protein belongs to the patF family.

It is found in the cytoplasm. The protein localises to the cytosol. It carries out the reaction phyllostine = neopatulin. The protein operates within mycotoxin biosynthesis; patulin biosynthesis. Functionally, part of the gene cluster that mediates the biosynthesis of patulin, an acetate-derived tetraketide mycotoxin produced by several fungal species that shows antimicrobial properties against several bacteria. PatF catalyzes the conversion of phyllostine into neopatulin. The pathway begins with the synthesis of 6-methylsalicylic acid by the polyketide synthase (PKS) patK via condensation of acetate and malonate units. The 6-methylsalicylic acid decarboxylase patG then catalyzes the decarboxylation of 6-methylsalicylic acid to yield m-cresol (also known as 3-methylphenol). These first reactions occur in the cytosol. The intermediate m-cresol is then transported into the endoplasmic reticulum where the cytochrome P450 monooxygenase patH converts it to m-hydroxybenzyl alcohol, which is further converted to gentisyl alcohol by the cytochrome P450 monooxygenase patI. The oxidoreductases patJ and patO further convert gentisyl alcohol to isoepoxydon in the vacuole. PatN catalyzes then the transformation of isoepoxydon into phyllostine. The cluster protein patF is responsible for the conversion from phyllostine to neopatulin whereas the alcohol dehydrogenase patD converts neopatulin to E-ascladiol. The steps between isoepoxydon and E-ascladiol occur in the cytosol, and E-ascladiol is probably secreted to the extracellular space by one of the cluster-specific transporters patC or patM. Finally, the secreted patulin synthase patE catalyzes the conversion of E-ascladiol to patulin. The chain is Patulin synthesis protein F from Aspergillus clavatus (strain ATCC 1007 / CBS 513.65 / DSM 816 / NCTC 3887 / NRRL 1 / QM 1276 / 107).